A 423-amino-acid polypeptide reads, in one-letter code: Limonoid 21-O-acetyltransferse (423 aa).

Catalysis depends on proton acceptor residues His-152 and Asp-362.

This sequence belongs to the plant acyltransferase family. In terms of assembly, monomer. As to expression, mainly expressed in petioles.

The catalysed reaction is isomeliandiol + acetyl-CoA = 21-O-acetyl-isomeliandiol + CoA. The protein operates within secondary metabolite biosynthesis; terpenoid biosynthesis. Its function is as follows. Acetyltransferase involved in the biosynthesis of limonoids triterpene natural products such as azadirachtin, an antifeedant widely used as bioinsecticide, and possessing many medicinal applications including anti-tumoral, anti-malarial, anti-rheumatic, antibacterial, anti-inflammatory, anti-pyretic and diuretic effects. Catalyzes the formation of 21-O-acetyl-isomeliandiol from isomeliandiol. This is Limonoid 21-O-acetyltransferse from Melia azedarach (Chinaberry tree).